A 428-amino-acid polypeptide reads, in one-letter code: tRNA(Ile)-lysidine synthase (428 aa).

An ATP-binding site is contributed by 28-33; it reads SGGVDS.

Belongs to the tRNA(Ile)-lysidine synthase family.

The protein resides in the cytoplasm. It catalyses the reaction cytidine(34) in tRNA(Ile2) + L-lysine + ATP = lysidine(34) in tRNA(Ile2) + AMP + diphosphate + H(+). Functionally, ligates lysine onto the cytidine present at position 34 of the AUA codon-specific tRNA(Ile) that contains the anticodon CAU, in an ATP-dependent manner. Cytidine is converted to lysidine, thus changing the amino acid specificity of the tRNA from methionine to isoleucine. This Streptococcus pyogenes serotype M3 (strain ATCC BAA-595 / MGAS315) protein is tRNA(Ile)-lysidine synthase.